A 228-amino-acid chain; its full sequence is Ribosomal RNA large subunit methyltransferase E (228 aa).

Positions 76, 78, 99, 115, and 139 each coordinate S-adenosyl-L-methionine. Lys179 acts as the Proton acceptor in catalysis.

It belongs to the class I-like SAM-binding methyltransferase superfamily. RNA methyltransferase RlmE family.

It localises to the cytoplasm. It catalyses the reaction uridine(2552) in 23S rRNA + S-adenosyl-L-methionine = 2'-O-methyluridine(2552) in 23S rRNA + S-adenosyl-L-homocysteine + H(+). In terms of biological role, specifically methylates the uridine in position 2552 of 23S rRNA at the 2'-O position of the ribose in the fully assembled 50S ribosomal subunit. This is Ribosomal RNA large subunit methyltransferase E from Bradyrhizobium diazoefficiens (strain JCM 10833 / BCRC 13528 / IAM 13628 / NBRC 14792 / USDA 110).